The sequence spans 131 residues: Snaclec coagulation factor IX/factor X-binding protein subunit A (131 aa).

The region spanning 1 to 131 (DCLPGWSSHE…EEPQRFTCEI (131 aa)) is the C-type lectin domain. Cystine bridges form between C2–C13, C30–C129, and C104–C121. S41, E43, and E47 together coordinate Ca(2+). E130 contacts Ca(2+).

The protein belongs to the snaclec family. As to quaternary structure, heterodimer of subunits A and B; disulfide-linked. As to expression, expressed by the venom gland.

It localises to the secreted. Anticoagulant protein which binds to coagulation factor IX (F9) and coagulation factor X (F10) in the presence of calcium. It may bind the gamma-carboxyglutamic acid-domain regions of factors with a 1 to 1 stoichiometry. The dissociation constant (K(d)) are 6.6 nM for factor IX (F9) and 125 nM for factor X (F10). Does not bind carbohydrates. This is Snaclec coagulation factor IX/factor X-binding protein subunit A from Echis carinatus (Saw-scaled viper).